The following is a 325-amino-acid chain: ATP synthase gamma chain (325 aa).

The protein belongs to the ATPase gamma chain family. As to quaternary structure, F-type ATPases have 2 components, CF(1) - the catalytic core - and CF(0) - the membrane proton channel. CF(1) has five subunits: alpha(3), beta(3), gamma(1), delta(1), epsilon(1). CF(0) has three main subunits: a, b and c.

The protein resides in the cell membrane. In terms of biological role, produces ATP from ADP in the presence of a proton gradient across the membrane. The gamma chain is believed to be important in regulating ATPase activity and the flow of protons through the CF(0) complex. This is ATP synthase gamma chain from Corynebacterium diphtheriae (strain ATCC 700971 / NCTC 13129 / Biotype gravis).